A 269-amino-acid polypeptide reads, in one-letter code: tRNA pseudouridine synthase A (269 aa).

Asp-51 (nucleophile) is an active-site residue. Tyr-109 contacts substrate.

Belongs to the tRNA pseudouridine synthase TruA family. As to quaternary structure, homodimer.

It catalyses the reaction uridine(38/39/40) in tRNA = pseudouridine(38/39/40) in tRNA. Formation of pseudouridine at positions 38, 39 and 40 in the anticodon stem and loop of transfer RNAs. The protein is tRNA pseudouridine synthase A of Haemophilus influenzae (strain 86-028NP).